Reading from the N-terminus, the 939-residue chain is Valine--tRNA ligase (939 aa).

Positions 47–57 (PNVTGILHMGH) match the 'HIGH' region motif. A 'KMSKS' region motif is present at residues 563 to 567 (KLSKS). An ATP-binding site is contributed by Lys-566. Residues 873–939 (AEHLAKEHAR…QSILDKIASL (67 aa)) are a coiled coil.

It belongs to the class-I aminoacyl-tRNA synthetase family. ValS type 1 subfamily. Monomer.

The protein resides in the cytoplasm. It carries out the reaction tRNA(Val) + L-valine + ATP = L-valyl-tRNA(Val) + AMP + diphosphate. Catalyzes the attachment of valine to tRNA(Val). As ValRS can inadvertently accommodate and process structurally similar amino acids such as threonine, to avoid such errors, it has a 'posttransfer' editing activity that hydrolyzes mischarged Thr-tRNA(Val) in a tRNA-dependent manner. This is Valine--tRNA ligase from Chlamydia muridarum (strain MoPn / Nigg).